A 252-amino-acid chain; its full sequence is Trans-aconitate 2-methyltransferase (252 aa).

Belongs to the methyltransferase superfamily. Tam family.

The protein resides in the cytoplasm. It catalyses the reaction trans-aconitate + S-adenosyl-L-methionine = (E)-3-(methoxycarbonyl)pent-2-enedioate + S-adenosyl-L-homocysteine. Functionally, catalyzes the S-adenosylmethionine monomethyl esterification of trans-aconitate. The chain is Trans-aconitate 2-methyltransferase from Escherichia coli O6:H1 (strain CFT073 / ATCC 700928 / UPEC).